The sequence spans 741 residues: Ribosome-releasing factor 2, mitochondrial (741 aa).

Residues 1 to 29 (MLKYEFLHGLQKRSHYLRQLSGQFFSRSY) constitute a mitochondrion transit peptide. In terms of domain architecture, tr-type G spans 31–310 (SKIRNIGILA…AVNSYLPAPE (280 aa)). GTP-binding positions include 40-47 (AHIDAGKT), 104-108 (DTPGH), and 158-161 (NKMD).

The protein belongs to the TRAFAC class translation factor GTPase superfamily. Classic translation factor GTPase family. EF-G/EF-2 subfamily.

The protein resides in the mitochondrion. Its function is as follows. Mitochondrial GTPase that mediates the disassembly of ribosomes from messenger RNA at the termination of mitochondrial protein biosynthesis. Not involved in the GTP-dependent ribosomal translocation step during translation elongation. The polypeptide is Ribosome-releasing factor 2, mitochondrial (Drosophila ananassae (Fruit fly)).